Reading from the N-terminus, the 253-residue chain is Transcription factor ORG2 (253 aa).

Residues 71–123 (VKKLNHNASERDRRKKINTLFSSLRSCLPASDQSKKLSIPETVSKSLKYIPEL) enclose the bHLH domain.

In terms of assembly, homodimer. In terms of tissue distribution, roots.

It is found in the nucleus. The chain is Transcription factor ORG2 (ORG2) from Arabidopsis thaliana (Mouse-ear cress).